The sequence spans 586 residues: CTP synthase (586 aa).

Residues 1–278 (MRKHPQTATK…DAFVVRRLNL (278 aa)) are amidoligase domain. Residue Ser-20 participates in CTP binding. Ser-20 is a binding site for UTP. ATP is bound by residues 21-26 (SLGKGL) and Asp-78. Residues Asp-78 and Glu-152 each contribute to the Mg(2+) site. CTP is bound by residues 159-161 (DIE), 199-204 (KTKPTQ), and Lys-235. UTP-binding positions include 199-204 (KTKPTQ) and Lys-235. The 249-residue stretch at 303–551 (RIALVGKYVE…VGAAIDYKAG (249 aa)) folds into the Glutamine amidotransferase type-1 domain. L-glutamine is bound at residue Gly-366. Residue Cys-393 is the Nucleophile; for glutamine hydrolysis of the active site. L-glutamine contacts are provided by residues 394 to 397 (LGLQ), Glu-416, and Arg-477. Catalysis depends on residues His-524 and Glu-526. Residues 560 to 586 (EIPEHTPNGSSHRDGVGQPLPEPASRG) are disordered.

This sequence belongs to the CTP synthase family. As to quaternary structure, homotetramer.

It carries out the reaction UTP + L-glutamine + ATP + H2O = CTP + L-glutamate + ADP + phosphate + 2 H(+). The catalysed reaction is L-glutamine + H2O = L-glutamate + NH4(+). The enzyme catalyses UTP + NH4(+) + ATP = CTP + ADP + phosphate + 2 H(+). Its pathway is pyrimidine metabolism; CTP biosynthesis via de novo pathway; CTP from UDP: step 2/2. Allosterically activated by GTP, when glutamine is the substrate; GTP has no effect on the reaction when ammonia is the substrate. The allosteric effector GTP functions by stabilizing the protein conformation that binds the tetrahedral intermediate(s) formed during glutamine hydrolysis. Inhibited by the product CTP, via allosteric rather than competitive inhibition. Catalyzes the ATP-dependent amination of UTP to CTP with either L-glutamine or ammonia as the source of nitrogen. Regulates intracellular CTP levels through interactions with the four ribonucleotide triphosphates. This Mycobacterium tuberculosis (strain ATCC 25177 / H37Ra) protein is CTP synthase.